Here is a 773-residue protein sequence, read N- to C-terminus: DEAD-box ATP-dependent RNA helicase 32 (773 aa).

A disordered region spans residues Ile-28 to Gly-71. Residues Ser-43 to Lys-56 show a composition bias toward low complexity. Positions Ala-80–Arg-108 match the Q motif motif. Residues Leu-111–Ile-287 form the Helicase ATP-binding domain. Residue Ala-124–Thr-131 participates in ATP binding. A DEAD box motif is present at residues Asp-235–Asp-238. Positions Pro-309–Gln-462 constitute a Helicase C-terminal domain. A coiled-coil region spans residues Asp-664–Ala-715. The span at Leu-699–Lys-708 shows a compositional bias: basic residues. Residues Leu-699–Asp-755 are disordered.

It belongs to the DEAD box helicase family. DDX10/DBP4 subfamily.

It catalyses the reaction ATP + H2O = ADP + phosphate + H(+). This chain is DEAD-box ATP-dependent RNA helicase 32, found in Oryza sativa subsp. japonica (Rice).